Here is a 298-residue protein sequence, read N- to C-terminus: ATP synthase gamma chain (298 aa).

The protein belongs to the ATPase gamma chain family. In terms of assembly, F-type ATPases have 2 components, CF(1) - the catalytic core - and CF(0) - the membrane proton channel. CF(1) has five subunits: alpha(3), beta(3), gamma(1), delta(1), epsilon(1). CF(0) has three main subunits: a, b and c.

The protein localises to the cell inner membrane. In terms of biological role, produces ATP from ADP in the presence of a proton gradient across the membrane. The gamma chain is believed to be important in regulating ATPase activity and the flow of protons through the CF(0) complex. In Wolinella succinogenes (strain ATCC 29543 / DSM 1740 / CCUG 13145 / JCM 31913 / LMG 7466 / NCTC 11488 / FDC 602W) (Vibrio succinogenes), this protein is ATP synthase gamma chain.